Here is a 339-residue protein sequence, read N- to C-terminus: Phenylalanine--tRNA ligase alpha subunit (339 aa).

Glu-254 is a Mg(2+) binding site.

It belongs to the class-II aminoacyl-tRNA synthetase family. Phe-tRNA synthetase alpha subunit type 1 subfamily. As to quaternary structure, tetramer of two alpha and two beta subunits. Mg(2+) is required as a cofactor.

It is found in the cytoplasm. The catalysed reaction is tRNA(Phe) + L-phenylalanine + ATP = L-phenylalanyl-tRNA(Phe) + AMP + diphosphate + H(+). In Alkaliphilus oremlandii (strain OhILAs) (Clostridium oremlandii (strain OhILAs)), this protein is Phenylalanine--tRNA ligase alpha subunit.